The primary structure comprises 492 residues: Glutamate--cysteine ligase A, chloroplastic (492 aa).

A disulfide bridge connects residues Cys-156 and Cys-376.

The protein belongs to the carboxylate-amine ligase family. Glutamate--cysteine ligase type 2 subfamily. In terms of assembly, homodimer or monomer when oxidized or reduced, respectively. In terms of processing, the Cys-156-Cys-376 disulfide bridge is known to modulate the enzyme activity according to the redox status. The oxidized form constitutes the active enzyme.

Its subcellular location is the plastid. The protein resides in the chloroplast. The catalysed reaction is L-cysteine + L-glutamate + ATP = gamma-L-glutamyl-L-cysteine + ADP + phosphate + H(+). It functions in the pathway sulfur metabolism; glutathione biosynthesis; glutathione from L-cysteine and L-glutamate: step 1/2. In Oryza sativa subsp. japonica (Rice), this protein is Glutamate--cysteine ligase A, chloroplastic (GSH1-1).